Consider the following 140-residue polypeptide: MRHYEIIFLVHPDQSEQVGGMVERYTKLIEEDGGKIHRLEDWGRRQLAYAINNVHKAHYVMLNVECTGKALAELEDNFRYNDAVIRNLVIRRDEAVTGQSEMLKAEENRSERRERRERPENAESNDGDDSDSNDSDNADE.

The interval Val96–Glu140 is disordered. Residues Leu103–Asn121 show a composition bias toward basic and acidic residues. Acidic residues predominate over residues Glu123–Glu140.

This sequence belongs to the bacterial ribosomal protein bS6 family.

In terms of biological role, binds together with bS18 to 16S ribosomal RNA. The polypeptide is Small ribosomal subunit protein bS6 (Ectopseudomonas mendocina (strain ymp) (Pseudomonas mendocina)).